Here is a 244-residue protein sequence, read N- to C-terminus: 5-oxoprolinase subunit A (244 aa).

Belongs to the LamB/PxpA family. Forms a complex composed of PxpA, PxpB and PxpC.

It catalyses the reaction 5-oxo-L-proline + ATP + 2 H2O = L-glutamate + ADP + phosphate + H(+). Functionally, catalyzes the cleavage of 5-oxoproline to form L-glutamate coupled to the hydrolysis of ATP to ADP and inorganic phosphate. The protein is 5-oxoprolinase subunit A of Shigella sonnei (strain Ss046).